The primary structure comprises 131 residues: Profilin-1 (131 aa).

It belongs to the profilin family. Occurs in many kinds of cells as a complex with monomeric actin in a 1:1 ratio. Cytoplasmic distribution in hypocotyls. In root nodules, it is found in all cells, but is more abundant in the vascular tissue as well as the endodermis.

The protein resides in the cytoplasm. It localises to the cytoskeleton. Its function is as follows. Binds to actin and affects the structure of the cytoskeleton. At high concentrations, profilin prevents the polymerization of actin, whereas it enhances it at low concentrations. By binding to PIP2, it inhibits the formation of IP3 and DG. The sequence is that of Profilin-1 from Phaseolus vulgaris (Kidney bean).